We begin with the raw amino-acid sequence, 122 residues long: Basic phospholipase A2 10 (122 aa).

Disulfide bonds link C26–C114, C28–C43, C42–C94, C48–C122, C49–C87, C56–C80, and C74–C85. Residues Y27, G29, and G31 each coordinate Ca(2+). Residue H46 is part of the active site. D47 is a binding site for Ca(2+). Residue D88 is part of the active site.

The cofactor is Ca(2+). Expressed by the venom gland.

The protein resides in the secreted. The enzyme catalyses a 1,2-diacyl-sn-glycero-3-phosphocholine + H2O = a 1-acyl-sn-glycero-3-phosphocholine + a fatty acid + H(+). Inhibited by chemical modifications mediated by p-BPB, anhydrous acetic acid and NBSF. In terms of biological role, snake venom phospholipase A2 (PLA2) that has a strong dose-dependent anticoagulant effect. In vivo, intramuscular and intervenal injection causes muscle necrosis. Induces moderate edema in the mouse foot pad. PLA2 catalyzes the calcium-dependent hydrolysis of the 2-acyl groups in 3-sn-phosphoglycerides. In Crotalus durissus cumanensis (South American rattlesnake), this protein is Basic phospholipase A2 10.